Reading from the N-terminus, the 1038-residue chain is Elongation factor 3 (1038 aa).

HEAT repeat units follow at residues glutamate 93 to lysine 131, serine 133 to tyrosine 170, arginine 174 to asparagine 211, aspartate 213 to alanine 249, methionine 255 to aspartate 287, and glutamine 292 to serine 331. Glutamate 406 contributes to the ADP binding site. 2 ABC transporter domains span residues isoleucine 426–leucine 654 and isoleucine 680–threonine 995. The ADP site is built by asparagine 716, glutamate 924, asparagine 927, and histidine 953. The tract at residues arginine 1012–glutamate 1038 is disordered. Basic and acidic residues predominate over residues alanine 1021 to tyrosine 1031.

This sequence belongs to the ABC transporter superfamily. ABCF family. EF3 subfamily. In terms of assembly, monomer.

The protein localises to the cytoplasm. The enzyme catalyses ATP + H2O = ADP + phosphate + H(+). The protein operates within protein biosynthesis; polypeptide chain elongation. Functionally, ribosome-dependent ATPase that functions in cytoplasmic translation elongation. Required for the ATP-dependent release of deacylated tRNA from the ribosomal E-site during protein biosynthesis. Stimulates the eEF1A-dependent binding of aminoacyl-tRNA to the ribosomal A-site, which has reduced affinity for tRNA as long as the E-site is occupied. Assists translation termination by stimulating the release of nascent protein from the ribosome by release factors. This chain is Elongation factor 3, found in Phytophthora infestans (strain T30-4) (Potato late blight agent).